The sequence spans 848 residues: Aryl hydrocarbon receptor (848 aa).

Met-1 bears the N-acetylmethionine mark. The propeptide occupies 1–10 (MNSSSANITY). A compositionally biased stretch (polar residues) spans 1–10 (MNSSSANITY). A disordered region spans residues 1–39 (MNSSSANITYASRKRRKPVQKTVKPIPAEGIKSNPSKRH). 2 consecutive short sequence motifs (nuclear localization signal) follow at residues 13–16 (RKRR) and 37–42 (KRHRDR). The 54-residue stretch at 27–80 (PAEGIKSNPSKRHRDRLNTELDRLASLLPFPQDVINKLDKLSVLRLSVSYLRAK) folds into the bHLH domain. The DNA-binding stretch occupies residues 38 to 66 (RHRDRLNTELDRLASLLPFPQDVINKLDK). Required for maintaining the overall integrity of the AHR:ARNT heterodimer and its transcriptional activity stretches follow at residues 50–82 (LASL…AKSF), 118–126 (LLQALNGFV), and 266–268 (FAI). Residues 64-72 (LDKLSVLRL) carry the Nuclear export signal motif. A PAS 1 domain is found at 111–181 (NLQEGEFLLQ…RQLHWALNPS (71 aa)). A PAS 2 domain is found at 275 to 342 (PSILEIRTKN…CAESHIRMIK (68 aa)). The PAC domain maps to 348–386 (MIVFRLLTKNNRWTWVQSNARLLYKNGRPDYIIVTQRPL). Residues 824–848 (TTHLQPLHHPSEARPFPDLTSSGFL) are disordered.

Homodimer. Heterodimer; efficient DNA binding requires dimerization with another bHLH protein. Interacts with ARNT; the heterodimer ARNT:AHR binds to core DNA sequence 5'-TGCGTG-3' within the dioxin response element (DRE) of target gene promoters and activates their transcription. Binds MYBBP1A. Interacts with coactivators including SRC-1, RIP140 and NOCA7, and with the corepressor SMRT. Interacts with NEDD8 and IVNS1ABP. Interacts with BMAL1. Interacts with HSP90AB1. Interacts with TIPARP; leading to mono-ADP-ribosylation of AHR and subsequent inhibition of AHR. Post-translationally, mono-ADP-ribosylated, leading to inhibit transcription activator activity of AHR. Expressed in all tissues tested including blood, brain, heart, kidney, liver, lung, pancreas and skeletal muscle. Expressed in retinal photoreceptors.

It is found in the cytoplasm. It localises to the nucleus. In terms of biological role, ligand-activated transcription factor that enables cells to adapt to changing conditions by sensing compounds from the environment, diet, microbiome and cellular metabolism, and which plays important roles in development, immunity and cancer. Upon ligand binding, translocates into the nucleus, where it heterodimerizes with ARNT and induces transcription by binding to xenobiotic response elements (XRE). Regulates a variety of biological processes, including angiogenesis, hematopoiesis, drug and lipid metabolism, cell motility and immune modulation. Xenobiotics can act as ligands: upon xenobiotic-binding, activates the expression of multiple phase I and II xenobiotic chemical metabolizing enzyme genes (such as the CYP1A1 gene). Mediates biochemical and toxic effects of halogenated aromatic hydrocarbons. Next to xenobiotics, natural ligands derived from plants, microbiota, and endogenous metabolism are potent AHR agonists. Tryptophan (Trp) derivatives constitute an important class of endogenous AHR ligands. Acts as a negative regulator of anti-tumor immunity: indoles and kynurenic acid generated by Trp catabolism act as ligand and activate AHR, thereby promoting AHR-driven cancer cell motility and suppressing adaptive immunity. Regulates the circadian clock by inhibiting the basal and circadian expression of the core circadian component PER1. Inhibits PER1 by repressing the CLOCK-BMAL1 heterodimer mediated transcriptional activation of PER1. The heterodimer ARNT:AHR binds to core DNA sequence 5'-TGCGTG-3' within the dioxin response element (DRE) of target gene promoters and activates their transcription. The chain is Aryl hydrocarbon receptor from Homo sapiens (Human).